The following is a 329-amino-acid chain: Fructose-1,6-bisphosphatase class 1 (329 aa).

Residues Glu-84, Asp-103, Leu-105, and Asp-106 each coordinate Mg(2+). Substrate is bound by residues 106-109 (DGSS), Asn-196, and Lys-262. Glu-268 serves as a coordination point for Mg(2+).

It belongs to the FBPase class 1 family. Homotetramer. Requires Mg(2+) as cofactor.

It is found in the cytoplasm. The enzyme catalyses beta-D-fructose 1,6-bisphosphate + H2O = beta-D-fructose 6-phosphate + phosphate. It participates in carbohydrate biosynthesis; gluconeogenesis. The polypeptide is Fructose-1,6-bisphosphatase class 1 (Shewanella halifaxensis (strain HAW-EB4)).